Here is a 458-residue protein sequence, read N- to C-terminus: Fumarate hydratase class II 2 (458 aa).

Residues 98 to 100 (SGT), 123 to 126 (NPND), 133 to 135 (SSN), and T181 contribute to the substrate site. H182 acts as the Proton donor/acceptor in catalysis. Residue S312 is part of the active site. Residues S313 and 318–320 (KVN) each bind substrate.

It belongs to the class-II fumarase/aspartase family. Fumarase subfamily. As to quaternary structure, homotetramer.

It is found in the cytoplasm. The catalysed reaction is (S)-malate = fumarate + H2O. The protein operates within carbohydrate metabolism; tricarboxylic acid cycle; (S)-malate from fumarate: step 1/1. Involved in the TCA cycle. Catalyzes the stereospecific interconversion of fumarate to L-malate. The polypeptide is Fumarate hydratase class II 2 (Pseudomonas aeruginosa (strain ATCC 15692 / DSM 22644 / CIP 104116 / JCM 14847 / LMG 12228 / 1C / PRS 101 / PAO1)).